The sequence spans 411 residues: Carbohydrate sulfotransferase 1 (411 aa).

Met-1 is a topological domain (cytoplasmic). A helical; Signal-anchor for type II membrane protein membrane pass occupies residues 2–23 (QCSWKAVLLLALASIAIQYTAI). Topologically, residues 24–411 (RTFTAKSFHT…VEERDFRPFL (388 aa)) are lumenal. Asn-56 carries N-linked (GlcNAc...) asparagine glycosylation. 69–75 (TRSGSSF) is a binding site for 3'-phosphoadenylyl sulfate. 2 N-linked (GlcNAc...) asparagine glycosylation sites follow: Asn-145 and Asn-189. Residue 234–242 (RDPRGILAS) coordinates 3'-phosphoadenylyl sulfate. An N-linked (GlcNAc...) asparagine glycan is attached at Asn-334. The Cell attachment site motif lies at 337 to 339 (RGD).

The protein belongs to the sulfotransferase 1 family. Gal/GlcNAc/GalNAc subfamily.

The protein localises to the golgi apparatus membrane. The catalysed reaction is 3'-phosphoadenylyl sulfate + keratan = adenosine 3',5'-bisphosphate + keratan 6'-sulfate.. It functions in the pathway glycan metabolism. Functionally, sulfotransferase that utilizes 3'-phospho-5'-adenylyl sulfate (PAPS) as sulfonate donor to catalyze the transfer of sulfate to position 6 of internal galactose (Gal) residues of keratan. Cooperates with B4GALT4 and B3GNT7 glycosyltransferases and CHST6 sulfotransferase to construct and elongate disulfated disaccharide unit [-&gt;3(6-sulfoGalbeta)1-&gt;4(6-sulfoGlcNAcbeta)1-&gt;] within keratan sulfate polymer. Has a preference for sulfating keratan sulfate, but it also transfers sulfate to the unsulfated polymer. Involved in biosynthesis of phosphacan, a major keratan sulfate proteoglycan in the developing brain. Involved in biosynthesis of 6-sulfoGalbeta-containing O-linked glycans in high endothelial venules of lymph nodes. May act in a synergistic manner with CHST4 to generate sialyl 6',6-disulfo Lewis X motif, a recognition determinant for immune cell receptors implicated in leukocyte trafficking. Catalyzes sulfation of N-acetyllactosamine (LacNAc) oligosaccharides with highest efficiency for sialylated LacNAc structures. The polypeptide is Carbohydrate sulfotransferase 1 (Chst1) (Rattus norvegicus (Rat)).